Consider the following 825-residue polypeptide: NT-3 growth factor receptor (825 aa).

The first 31 residues, 1-31 (MDVSLCPAKCSFWRIFLLGSVWLDYVGSVLA), serve as a signal peptide directing secretion. 2 disulfide bridges follow: Cys32/Cys38 and Cys36/Cys45. The Extracellular portion of the chain corresponds to 32–429 (CPANCVCSKT…TVTHKPEEDT (398 aa)). Asn68, Asn72, and Asn79 each carry an N-linked (GlcNAc...) asparagine glycan. 2 LRR repeats span residues 104–125 (GLQK…AFAK) and 128–149 (HLRY…LFQT). Asn133 and Asn163 each carry an N-linked (GlcNAc...) asparagine glycan. One can recognise an LRRCT domain in the interval 160–209 (NFFNCSCDIRWMQLWQEQGEARLNSQNLYCINADGSQLPLFRMNISQCDL). Disulfide bonds link Cys164/Cys189 and Cys166/Cys207. N-linked (GlcNAc...) asparagine glycans are attached at residues Asn203, Asn218, Asn232, Asn259, Asn267, Asn272, and Asn294. 2 consecutive Ig-like C2-type domains span residues 210–300 (PEIS…VALT) and 309–382 (SLEE…IAKN). Cys231 and Cys284 are disulfide-bonded. Residues Cys320 and Cys362 are joined by a disulfide bond. N-linked (GlcNAc...) asparagine glycosylation is found at Asn375 and Asn388. The helical transmembrane segment at 430–453 (FGVSIAVGLAAFACVLLVVLFIMI) threads the bilayer. The Cytoplasmic portion of the chain corresponds to 454–825 (NKYGRRSKFG…ATPIYLDILG (372 aa)). Phosphoserine is present on Ser493. Tyr516 bears the Phosphotyrosine; by autocatalysis mark. The 288-residue stretch at 538-825 (IVLKRELGEG…ATPIYLDILG (288 aa)) folds into the Protein kinase domain. ATP is bound by residues 544 to 552 (LGEGAFGKV) and Lys572. Asp679 acts as the Proton acceptor in catalysis. Phosphotyrosine; by autocatalysis occurs at positions 705, 709, and 710.

Belongs to the protein kinase superfamily. Tyr protein kinase family. Insulin receptor subfamily. As to quaternary structure, exists in a dynamic equilibrium between monomeric (low affinity) and dimeric (high affinity) structures. Binds SH2B2. Interacts with SQSTM1 and KIDINS220. Interacts with PTPRS. Interacts with MAPK8IP3/JIP3. In terms of processing, ligand-mediated auto-phosphorylation.

The protein localises to the membrane. It catalyses the reaction L-tyrosyl-[protein] + ATP = O-phospho-L-tyrosyl-[protein] + ADP + H(+). Its function is as follows. Receptor tyrosine kinase involved in nervous system and probably heart development. Upon binding of its ligand NTF3/neurotrophin-3, NTRK3 autophosphorylates and activates different signaling pathways, including the phosphatidylinositol 3-kinase/AKT and the MAPK pathways, that control cell survival and differentiation. This is NT-3 growth factor receptor (NTRK3) from Saimiri boliviensis boliviensis (Bolivian squirrel monkey).